A 270-amino-acid chain; its full sequence is Proteasome subunit alpha (270 aa).

Residues 229–270 (LLDTEAAGSTPTDAPSDTEDGDSTDGTDRADGTTDSTEETEK) are disordered. Acidic residues predominate over residues 244–253 (SDTEDGDSTD).

The protein belongs to the peptidase T1A family. As to quaternary structure, the 20S proteasome core is composed of 14 alpha and 14 beta subunits that assemble into four stacked heptameric rings, resulting in a barrel-shaped structure. The two inner rings, each composed of seven catalytic beta subunits, are sandwiched by two outer rings, each composed of seven alpha subunits. The catalytic chamber with the active sites is on the inside of the barrel. Has a gated structure, the ends of the cylinder being occluded by the N-termini of the alpha-subunits. Is capped by the proteasome-associated ATPase, ARC.

The protein resides in the cytoplasm. The protein operates within protein degradation; proteasomal Pup-dependent pathway. With respect to regulation, the formation of the proteasomal ATPase ARC-20S proteasome complex, likely via the docking of the C-termini of ARC into the intersubunit pockets in the alpha-rings, may trigger opening of the gate for substrate entry. Interconversion between the open-gate and close-gate conformations leads to a dynamic regulation of the 20S proteasome proteolysis activity. Functionally, component of the proteasome core, a large protease complex with broad specificity involved in protein degradation. The chain is Proteasome subunit alpha from Streptomyces griseus subsp. griseus (strain JCM 4626 / CBS 651.72 / NBRC 13350 / KCC S-0626 / ISP 5235).